The following is a 239-amino-acid chain: Non-classical arabinogalactan protein 30 (239 aa).

Residues 1-24 (MGIIGKSVSLTLFALLCFTSSVFT) form the signal peptide. N-linked (GlcNAc...) asparagine glycosylation is present at Asn-106.

The protein belongs to the non-classical AGP family. Specifically expressed in root tips.

The protein resides in the secreted. The protein localises to the cell wall. Proteoglycan required for the timing of seed germination. May function in the abscisic acid (ABA) response. The chain is Non-classical arabinogalactan protein 30 from Arabidopsis thaliana (Mouse-ear cress).